Consider the following 1089-residue polypeptide: Electroneutral sodium bicarbonate exchanger 1 (1089 aa).

The Extracellular segment spans residues 1 to 476 (MPAGSNEPDG…DYRDALSLQC (476 aa)). Residues 55-90 (LGRQSHRHHRTHGQKHRRRGGRGKGASQGEEGLEAL) form a disordered region. Over residues 58 to 76 (QSHRHHRTHGQKHRRRGGR) the composition is skewed to basic residues. The chain crosses the membrane as a helical span at residues 477–497 (LASFLFLYCACMSPVITFGGL). The Cytoplasmic segment spans residues 498–505 (LGEATEGR). Residues 506 to 526 (ISAIESLFGASMTGIAYSLFA) traverse the membrane as a helical segment. The Extracellular segment spans residues 527–563 (GQPLTILGSTGPVLVFEKILFKFCKDYALSYLSLRAL). Residues 564 to 584 (IGLWTAFLCIVLVATDASSLV) form a helical membrane-spanning segment. Topologically, residues 585 to 593 (CYITRFTEE) are cytoplasmic. A helical membrane pass occupies residues 594-614 (AFASLICIIFIYEAIEKLIHL). Residues 615 to 685 (AETYPIHMHS…EFMGSACGHH (71 aa)) are Extracellular-facing. 2 disulfides stabilise this stretch: cysteine 634–cysteine 682 and cysteine 636–cysteine 670. Asparagine 644 carries an N-linked (GlcNAc) asparagine glycan. The chain crosses the membrane as a helical span at residues 686–706 (GPYTPDVLFWSCILFFATFIV). The Cytoplasmic portion of the chain corresponds to 707 to 729 (SSTLKTFKTSRYFPTRVRSMVSD). Residues 730-750 (FAVFLTIFTMVVLDFLIGVPS) traverse the membrane as a helical segment. Residues 751–776 (PKLQVPNVFKPTRDDRGWFINPIGPN) are Extracellular-facing. The chain crosses the membrane as a helical span at residues 777–797 (PWWTVIAAIIPALLCTILIFM). Over 798 to 822 (DQQITAVIINRKEHKLKKGCGYHLD) the chain is Cytoplasmic. A helical membrane pass occupies residues 823–843 (LLMVAVMLGVCSIMGLPWFVA). At 844–879 (ATVLSITHVNSLKLESECSAPGEQPKFLGIREQRVT) the chain is on the extracellular side. The chain crosses the membrane as a helical span at residues 880–900 (GLMIFVLMGCSVFMTAVLKFI). The Cytoplasmic portion of the chain corresponds to 901-902 (PM). Residues 903–923 (PVLYGVFLYMGVSSLQGIQFF) form a helical membrane-spanning segment. Residues 924–960 (DRLKLFGMPAKHQPDFIYLRHVPLRKVHLFTLVQLTC) are Extracellular-facing. The helical transmembrane segment at 961 to 981 (LVLLWVIKASPAAIVFPMMVL) threads the bilayer. Topologically, residues 982–1089 (ALVFVRKVMD…GNTKEKSPFN (108 aa)) are cytoplasmic.

This sequence belongs to the anion exchanger (TC 2.A.31) family. In terms of assembly, homodimer. Expressed in the hippocampal neurons (at protein level). Highly expressed in brain with lower levels in lung, kidney and heart. In the kidney, there is high expression in the inner medulla, localized to the inner medullary collecting duct. In the brain, there seems to be three transcripts each having a different expression pattern. The smaller 3kb transcript has highest expression levels in the thalamus and the largest 9.5kb transcript has highest levels in the substantia nigra. The middle transcript of 4.4kb, which is also the main transcript in kidney, is highly expressed in thalamus. Hence, the highest levels are observed in the thalamus, amygdala and caudate nucleus and very low expression was seen in the corpus callosum.

The protein localises to the cell membrane. Its subcellular location is the apical cell membrane. It localises to the basolateral cell membrane. It is found in the cytoplasmic vesicle. The protein resides in the secretory vesicle. The protein localises to the synaptic vesicle membrane. It carries out the reaction 2 hydrogencarbonate(out) + chloride(in) + Na(+)(out) = 2 hydrogencarbonate(in) + chloride(out) + Na(+)(in). Mediates electroneutral sodium- and carbonate-dependent chloride-HCO3(-) exchange with a Na(+):HCO3(-) stoichiometry of 2:1. Plays a major role in pH regulation in neurons. Mediates sodium reabsorption in the renal cortical collecting ducts. The sequence is that of Electroneutral sodium bicarbonate exchanger 1 from Mus musculus (Mouse).